A 251-amino-acid chain; its full sequence is uncharacterized protein (251 aa).

Positions 1 to 25 (MRKKKFLSRFSFSSLFLLCGTLLSA) are cleaved as a signal peptide. A lipid anchor (N-palmitoyl cysteine) is attached at C26. C26 carries the S-diacylglycerol cysteine lipid modification.

The protein belongs to the MG439/MG440 family.

The protein localises to the cell membrane. This is an uncharacterized protein from Mycoplasma pneumoniae (strain ATCC 29342 / M129 / Subtype 1) (Mycoplasmoides pneumoniae).